Reading from the N-terminus, the 1588-residue chain is Autotransporter adhesin EhaG (1588 aa).

The signal sequence occupies residues 1–53 (MNKIFKVIWNPATGNYTVTSETAKSRGKKSGRSKLLISALVAGGMLSSFGALA). Positions 54–1499 (NAGNDNGQGV…QETKQYTDQR (1446 aa)) are surface exposed passenger domain. Positions 1500-1588 (MVEMDNKLSK…SAALGAGIQW (89 aa)) are translocator domain. A run of 4 beta stranded transmembrane segments spans residues 1534–1544 (GASMASIGGGT), 1548–1558 (ESAVALGVSMV), 1567–1573 (KLQGSTN), and 1577–1588 (EYSAALGAGIQW).

It belongs to the autotransporter-2 (AT-2) (TC 1.B.40) family. As to quaternary structure, homotrimer.

The protein localises to the cell surface. The protein resides in the cell outer membrane. In terms of biological role, mediates aggregation, biofilm formation and adhesion to a range of extracellular matrix (ECM) proteins, such as fibronectin, fibrinogen, laminin and collagen types I, II, III, and V. Mediates adhesion to intestinal epithelial cells. The protein is Autotransporter adhesin EhaG of Escherichia coli O157:H7.